The sequence spans 186 residues: ATP synthase subunit b (186 aa).

A helical transmembrane segment spans residues 25–45 (IVWSVVCVAIIAVVFYKYVIP).

The protein belongs to the ATPase B chain family. In terms of assembly, F-type ATPases have 2 components, F(1) - the catalytic core - and F(0) - the membrane proton channel. F(1) has five subunits: alpha(3), beta(3), gamma(1), delta(1), epsilon(1). F(0) has three main subunits: a(1), b(2) and c(10-14). The alpha and beta chains form an alternating ring which encloses part of the gamma chain. F(1) is attached to F(0) by a central stalk formed by the gamma and epsilon chains, while a peripheral stalk is formed by the delta and b chains.

The protein resides in the cell membrane. Functionally, f(1)F(0) ATP synthase produces ATP from ADP in the presence of a proton or sodium gradient. F-type ATPases consist of two structural domains, F(1) containing the extramembraneous catalytic core and F(0) containing the membrane proton channel, linked together by a central stalk and a peripheral stalk. During catalysis, ATP synthesis in the catalytic domain of F(1) is coupled via a rotary mechanism of the central stalk subunits to proton translocation. In terms of biological role, component of the F(0) channel, it forms part of the peripheral stalk, linking F(1) to F(0). The sequence is that of ATP synthase subunit b from Nocardia farcinica (strain IFM 10152).